The primary structure comprises 117 residues: Small ribosomal subunit protein uS13 (117 aa).

Residues 94-117 (SLPLRGQRTKTNARTRKGPRRLIK) form a disordered region.

It belongs to the universal ribosomal protein uS13 family. Part of the 30S ribosomal subunit. Forms a loose heterodimer with protein S19. Forms two bridges to the 50S subunit in the 70S ribosome.

Its function is as follows. Located at the top of the head of the 30S subunit, it contacts several helices of the 16S rRNA. In the 70S ribosome it contacts the 23S rRNA (bridge B1a) and protein L5 of the 50S subunit (bridge B1b), connecting the 2 subunits; these bridges are implicated in subunit movement. Contacts the tRNAs in the A and P-sites. The polypeptide is Small ribosomal subunit protein uS13 (Vesicomyosocius okutanii subsp. Calyptogena okutanii (strain HA)).